Consider the following 281-residue polypeptide: MVPGKFIFTATFVLLCTIIAVVLEYQSKKDKPVLDKEKLQEFPLVAKTVLTHNTAIYRFGLPKSTQVLGLPIGQHISVQANINGKDILRSYTPTSLDSDAVGHFELLIKSYEKGNISKHFAQLNIGDKIKVRGPKGFYHYQPNMNEEIGMIAGGTGIAPMYQIMKSIFANDSDKTKVSLVYGNQTEEDILLKKELDAFVERKPDQFKVYYLLDKAPEAWTGGVGYITVDTMKERLPAPAEGVQLLVCGPPPMVSSIKRNAVTLGYEKAKPISKMGDQIFVF.

Residues 2 to 22 (VPGKFIFTATFVLLCTIIAVV) traverse the membrane as a helical segment. Residues 37–141 (EKLQEFPLVA…RGPKGFYHYQ (105 aa)) enclose the FAD-binding FR-type domain. FAD is bound by residues 121-136 (AQLNIGDKIKVRGPKG) and 147-179 (EIGMIAGGTGIAPMYQIMKSIFANDSDKTKVSL).

This sequence belongs to the flavoprotein pyridine nucleotide cytochrome reductase family. As to quaternary structure, monomer. Component of the 2-(3-amino-3-carboxypropyl)histidine synthase complex composed of DPH1, DPH2, DPH3 and a NADH-dependent reductase, predominantly CBR1. It depends on FAD as a cofactor.

It is found in the mitochondrion outer membrane. It catalyses the reaction 2 Fe(III)-[cytochrome b5] + NADH = 2 Fe(II)-[cytochrome b5] + NAD(+) + H(+). The catalysed reaction is 2 Fe(3+)-[Dph3] + NADH = 2 Fe(2+)-[Dph3] + NAD(+) + H(+). It participates in protein modification; peptidyl-diphthamide biosynthesis. NADH-dependent reductase for DPH3 and cytochrome b5. Required for the first step of diphthamide biosynthesis, a post-translational modification of histidine which occurs in elongation factor 2. DPH1 and DPH2 transfer a 3-amino-3-carboxypropyl (ACP) group from S-adenosyl-L-methionine (SAM) to a histidine residue, the reaction is assisted by a reduction system comprising DPH3 and a NADH-dependent reductase, predominantly CBR1. By reducing DPH3, also involved in the formation of the tRNA wobble base modification mcm5s 2U (5-methoxycarbonylmethyl-2-thiouridine), mediated by the elongator complex. The cytochrome b5/NADH cytochrome b5 reductase electron transfer system supports the catalytic activity of several sterol biosynthetic enzymes. This Kluyveromyces lactis (strain ATCC 8585 / CBS 2359 / DSM 70799 / NBRC 1267 / NRRL Y-1140 / WM37) (Yeast) protein is NADH-cytochrome b5 reductase 1 (CBR1).